We begin with the raw amino-acid sequence, 101 residues long: Small ribosomal subunit protein bS18c (101 aa).

Belongs to the bacterial ribosomal protein bS18 family. In terms of assembly, part of the 30S ribosomal subunit.

The protein localises to the plastid. Its subcellular location is the chloroplast. The protein is Small ribosomal subunit protein bS18c of Aethionema grandiflorum (Persian stone-cress).